Here is a 461-residue protein sequence, read N- to C-terminus: MIKVGILDSTLREGEQTPGVIFTVDQRVEIAKALSDLGVSMIEAGHPAVSPDIYEGIKRIVKLKKEGIITSEIVGHSRAVKRDIEIAAELEVDRIAIFYGVSDLHLKAKHKATREEALRTIAETISYAKNHGVKVRFTAEDGSRTDFDFLVTVSKTARDAGADRVSIADTVGILYPSKTKELFSALTREVPNLEFDIHAHNDLGLAVANALAAIEGGATIIHATVNGLGERVGIVPLQQIAAAIKYHFGIEVVKLDKLQYVSSLVEKYSGIPMPPNYPITGDYAFLHKAGVHVAGVLNDPRTYEFMPPETFGRTRDYTIDKYTGKHALRDKYEKLGVKISDAEMDQILAKIKSNTTIRFYRDVDLLELAEEVTGRVLKPRPPEQIEALISVKCDSNVYTTSVTRRLSVINGVKEVMEISGDYDILVKVQAKDSNELNQIIESIRATKGVRSTLTSLVLKKM.

Residues 4–259 form the Pyruvate carboxyltransferase domain; that stretch reads VGILDSTLRE…IEVVKLDKLQ (256 aa). Position 12 (R12) interacts with 2-oxoglutarate. E13 serves as a coordination point for Mg(2+). Residues H76, R136, and T170 each coordinate 2-oxoglutarate. Positions 198 and 200 each coordinate Mg(2+). H292 (proton acceptor) is an active-site residue.

The protein belongs to the alpha-IPM synthase/homocitrate synthase family. Homocitrate synthase LYS20/LYS21 subfamily. The cofactor is Mg(2+). It depends on Mn(2+) as a cofactor.

The enzyme catalyses acetyl-CoA + 2-oxoglutarate + H2O = (2R)-homocitrate + CoA + H(+). It functions in the pathway amino-acid biosynthesis; L-lysine biosynthesis via AAA pathway; L-alpha-aminoadipate from 2-oxoglutarate: step 1/5. Its function is as follows. Catalyzes the aldol-type condensation of 2-oxoglutarate with acetyl-CoA to yield homocitrate. Carries out the first step of the alpha-aminoadipate (AAA) lysine biosynthesis pathway. This chain is Homocitrate synthase, found in Saccharolobus islandicus (strain Y.N.15.51 / Yellowstone #2) (Sulfolobus islandicus).